A 115-amino-acid chain; its full sequence is Holo-[acyl-carrier-protein] synthase (115 aa).

Mg(2+)-binding residues include D6 and E51.

This sequence belongs to the P-Pant transferase superfamily. AcpS family. It depends on Mg(2+) as a cofactor.

It localises to the cytoplasm. The enzyme catalyses apo-[ACP] + CoA = holo-[ACP] + adenosine 3',5'-bisphosphate + H(+). Functionally, transfers the 4'-phosphopantetheine moiety from coenzyme A to a Ser of acyl-carrier-protein. This chain is Holo-[acyl-carrier-protein] synthase, found in Campylobacter jejuni subsp. doylei (strain ATCC BAA-1458 / RM4099 / 269.97).